A 213-amino-acid polypeptide reads, in one-letter code: FMN-dependent NADH:quinone oxidoreductase (213 aa).

S10 contacts FMN.

The protein belongs to the azoreductase type 1 family. In terms of assembly, homodimer. Requires FMN as cofactor.

It carries out the reaction 2 a quinone + NADH + H(+) = 2 a 1,4-benzosemiquinone + NAD(+). The catalysed reaction is N,N-dimethyl-1,4-phenylenediamine + anthranilate + 2 NAD(+) = 2-(4-dimethylaminophenyl)diazenylbenzoate + 2 NADH + 2 H(+). Quinone reductase that provides resistance to thiol-specific stress caused by electrophilic quinones. Functionally, also exhibits azoreductase activity. Catalyzes the reductive cleavage of the azo bond in aromatic azo compounds to the corresponding amines. The protein is FMN-dependent NADH:quinone oxidoreductase of Opitutus terrae (strain DSM 11246 / JCM 15787 / PB90-1).